Reading from the N-terminus, the 233-residue chain is Large ribosomal subunit protein mL67 (233 aa).

Residues 214–233 (RQQAQQSEQQSQSELESQTA) are disordered. Residues 215–233 (QQAQQSEQQSQSELESQTA) show a composition bias toward low complexity.

It belongs to the mitochondrion-specific ribosomal protein mL67 family.

The protein localises to the nucleus. The protein resides in the mitochondrion. In terms of biological role, transcription factor involved in regulation of RNA polymerase II-dependent transcription. Also involved in regulation of mitochondrial DNA recombination, maintenance and repair, and generation of homoplasmic cells. This is Large ribosomal subunit protein mL67 (MHR1) from Debaryomyces hansenii (strain ATCC 36239 / CBS 767 / BCRC 21394 / JCM 1990 / NBRC 0083 / IGC 2968) (Yeast).